A 908-amino-acid chain; its full sequence is DNA mismatch repair protein MutS (908 aa).

Position 662-669 (662-669) interacts with ATP; sequence GPNMGGKS.

Belongs to the DNA mismatch repair MutS family.

Its function is as follows. This protein is involved in the repair of mismatches in DNA. It is possible that it carries out the mismatch recognition step. This protein has a weak ATPase activity. This chain is DNA mismatch repair protein MutS, found in Rhizobium etli (strain ATCC 51251 / DSM 11541 / JCM 21823 / NBRC 15573 / CFN 42).